Reading from the N-terminus, the 273-residue chain is Replication factor A protein 2 (273 aa).

Positions 1 to 13 are enriched in polar residues; it reads MATYQPYNEYSSV. The segment at 1 to 38 is disordered; the sequence is MATYQPYNEYSSVTGGGFENSESRPGSGESETNTRVNT. S27 carries the post-translational modification Phosphoserine. Residues 29–38 are compositionally biased toward polar residues; that stretch reads ESETNTRVNT. The segment at residues 69 to 157 is a DNA-binding region (OB); that stretch reads VCFVGVVRNI…NIQYAVIKPI (89 aa). S122 is modified (phosphoserine).

Belongs to the replication factor A protein 2 family. As to quaternary structure, heterotrimer of 69, 36, and 13 kDa chains. The DNA-binding activity may reside exclusively on the 69 kDa subunit. Interacts with MCM10. Post-translationally, phosphorylated in a cell cycle-dependent manner with phosphorylation increasing at the entry in S phase and dephosphorylation occurring at mitosis. In terms of processing, the N-terminus is blocked.

The protein localises to the nucleus. Functionally, binds to single-stranded sequences participating in DNA replication in addition to those mediating transcriptional repression (URS1) and activation (CAR1). Stimulates the activity of a cognate strand exchange protein (SEP1). It cooperates with T-AG and DNA topoisomerase I to unwind template DNA containing the simian virus 40 origin of DNA replication. The protein is Replication factor A protein 2 (RFA2) of Saccharomyces cerevisiae (strain ATCC 204508 / S288c) (Baker's yeast).